The following is a 167-amino-acid chain: MLPMITGFMNYGQQTLRAARYIGQGFMITLSHTNRLPVTIQYPYEKLIISERFRGRIHFEFDKCIACEVCVRVCPIDLPVVDWKLETHIRKKRLLNYSIDFGICIFCGNCVEYCPTNCLSMTEEYEFSTYDRHELNYNQIALGRLPMSVIDDYTIRTILNSPQIKNG.

4Fe-4S ferredoxin-type domains lie at 55-84 (GRIH…VDWK) and 95-124 (LNYS…MTEE). [4Fe-4S] cluster-binding residues include cysteine 64, cysteine 67, cysteine 70, cysteine 74, cysteine 104, cysteine 107, cysteine 110, and cysteine 114.

This sequence belongs to the complex I 23 kDa subunit family. In terms of assembly, NDH is composed of at least 16 different subunits, 5 of which are encoded in the nucleus. It depends on [4Fe-4S] cluster as a cofactor.

The protein localises to the plastid. The protein resides in the chloroplast thylakoid membrane. The enzyme catalyses a plastoquinone + NADH + (n+1) H(+)(in) = a plastoquinol + NAD(+) + n H(+)(out). It catalyses the reaction a plastoquinone + NADPH + (n+1) H(+)(in) = a plastoquinol + NADP(+) + n H(+)(out). Functionally, NDH shuttles electrons from NAD(P)H:plastoquinone, via FMN and iron-sulfur (Fe-S) centers, to quinones in the photosynthetic chain and possibly in a chloroplast respiratory chain. The immediate electron acceptor for the enzyme in this species is believed to be plastoquinone. Couples the redox reaction to proton translocation, and thus conserves the redox energy in a proton gradient. In Aethionema grandiflorum (Persian stone-cress), this protein is NAD(P)H-quinone oxidoreductase subunit I, chloroplastic.